A 497-amino-acid chain; its full sequence is Serine hydroxymethyltransferase (497 aa).

Residues Leu176 and 180–182 contribute to the (6S)-5,6,7,8-tetrahydrofolate site; that span reads GHL. Residue Lys289 is modified to N6-(pyridoxal phosphate)lysine.

Belongs to the SHMT family. In terms of assembly, homodimer. Requires pyridoxal 5'-phosphate as cofactor.

It localises to the cytoplasm. The enzyme catalyses (6R)-5,10-methylene-5,6,7,8-tetrahydrofolate + glycine + H2O = (6S)-5,6,7,8-tetrahydrofolate + L-serine. It functions in the pathway one-carbon metabolism; tetrahydrofolate interconversion. Its pathway is amino-acid biosynthesis; glycine biosynthesis; glycine from L-serine: step 1/1. Functionally, catalyzes the reversible interconversion of serine and glycine with tetrahydrofolate (THF) serving as the one-carbon carrier. This reaction serves as the major source of one-carbon groups required for the biosynthesis of purines, thymidylate, methionine, and other important biomolecules. Also exhibits THF-independent aldolase activity toward beta-hydroxyamino acids, producing glycine and aldehydes, via a retro-aldol mechanism. This Chlamydia felis (strain Fe/C-56) (Chlamydophila felis) protein is Serine hydroxymethyltransferase.